Here is a 217-residue protein sequence, read N- to C-terminus: Small ribosomal subunit protein uS3 (217 aa).

One can recognise a KH type-2 domain in the interval 38–106 (IRKFVQKELA…QVHINIIEIK (69 aa)).

It belongs to the universal ribosomal protein uS3 family. As to quaternary structure, part of the 30S ribosomal subunit. Forms a tight complex with proteins S10 and S14.

Binds the lower part of the 30S subunit head. Binds mRNA in the 70S ribosome, positioning it for translation. This chain is Small ribosomal subunit protein uS3, found in Streptococcus gordonii (strain Challis / ATCC 35105 / BCRC 15272 / CH1 / DL1 / V288).